The primary structure comprises 258 residues: Small ribosomal subunit protein uS2 (258 aa).

The interval 227–258 is disordered; that stretch reads GEQFAPASEQKEEVKTQEVQEVEDSNDDVIDD. Positions 235–244 are enriched in basic and acidic residues; that stretch reads EQKEEVKTQE. Over residues 246–258 the composition is skewed to acidic residues; the sequence is QEVEDSNDDVIDD.

The protein belongs to the universal ribosomal protein uS2 family.

This Caldicellulosiruptor saccharolyticus (strain ATCC 43494 / DSM 8903 / Tp8T 6331) protein is Small ribosomal subunit protein uS2.